Reading from the N-terminus, the 345-residue chain is Trace amine-associated receptor 6 (345 aa).

Residues 1–32 (MGSNSSPPAVLQLCYENVNGSCVKTPYSPGPR) lie on the Extracellular side of the membrane. A glycan (N-linked (GlcNAc...) asparagine) is linked at Asn-19. Intrachain disulfides connect Cys-22/Cys-186 and Cys-105/Cys-190. The chain crosses the membrane as a helical span at residues 33–53 (VLLYAVFGFGAVLAVFGNLLV). At 54-68 (MISILHFKQLHSPTN) the chain is on the cytoplasmic side. The chain crosses the membrane as a helical span at residues 69 to 89 (FLIASLACADFWVGVSVMPFS). Topologically, residues 90–107 (MVRSIESCWYFGRSFCTF) are extracellular. The helical transmembrane segment at 108-128 (HTCCDVAFCYSSLFHLSFISI) threads the bilayer. Over 129–147 (DRYIAVTDPLVYPTKFTVS) the chain is Cytoplasmic. A helical membrane pass occupies residues 148-168 (VSGICISISWILPLAYSGAVF). At 169–202 (YTGVYADGLEEVSDAVNCVGGCQVVVNQNWVLID) the chain is on the extracellular side. Residues 203-223 (FLSFLIPTLVMIILYGNIFLV) traverse the membrane as a helical segment. Residues 224-259 (ARQQAKKIETVGNKAESSSESYKARVARRERKAAKT) lie on the Cytoplasmic side of the membrane. Residues 260-276 (LGITVVAFMISWLPYSI) form a helical membrane-spanning segment. The Extracellular portion of the chain corresponds to 277 to 282 (DSLVDA). Residues 283-302 (FMGFITPAYIYEICVWCAYY) traverse the membrane as a helical segment. The Cytoplasmic portion of the chain corresponds to 303 to 345 (NSAMNPLIYALFYPWFKKAIKVIMSGQVFKNSSATMNLFSEQI).

This sequence belongs to the G-protein coupled receptor 1 family.

The protein resides in the cell membrane. Functionally, olfactory receptor specific for trace amines, such as beta-phenylethylamine (beta-PEA). Trace amine compounds are enriched in animal body fluids and act on trace amine-associated receptors (TAARs) to elicit both intraspecific and interspecific innate behaviors. Beta-PEA-binding causes a conformation change that triggers signaling via G(s)-class of G alpha proteins (GNAL or GNAS). The polypeptide is Trace amine-associated receptor 6 (Taar6) (Rattus norvegicus (Rat)).